A 276-amino-acid polypeptide reads, in one-letter code: Glucosamine-6-phosphate deaminase 2 (276 aa).

D72 serves as the catalytic Proton acceptor; for enolization step. Positions 106–130 form a coiled coil; that stretch reads ILDGNATDLQAECDAFEKKIKEAGG. Catalysis depends on D141, which acts as the For ring-opening step. Catalysis depends on H143, which acts as the Proton acceptor; for ring-opening step. Catalysis depends on E148, which acts as the For ring-opening step. At T161 the chain carries Phosphothreonine.

It belongs to the glucosamine/galactosamine-6-phosphate isomerase family. In terms of assembly, homohexamer.

The protein resides in the cytoplasm. It catalyses the reaction alpha-D-glucosamine 6-phosphate + H2O = beta-D-fructose 6-phosphate + NH4(+). It functions in the pathway nucleotide-sugar biosynthesis; UDP-N-acetyl-alpha-D-glucosamine biosynthesis; alpha-D-glucosamine 6-phosphate from D-fructose 6-phosphate: step 1/1. Its activity is regulated as follows. Allosterically activated by N-acetylglucosamine-6-phosphate (GlcNAc6P). Functionally, catalyzes the reversible conversion of alpha-D-glucosamine 6-phosphate (GlcN-6P) into beta-D-fructose 6-phosphate (Fru-6P) and ammonium ion, a regulatory reaction step in de novo uridine diphosphate-N-acetyl-alpha-D-glucosamine (UDP-GlcNAc) biosynthesis via hexosamine pathway. Deamination is coupled to aldo-keto isomerization mediating the metabolic flux from UDP-GlcNAc toward Fru-6P. At high ammonium level can drive amination and isomerization of Fru-6P toward hexosamines and UDP-GlcNAc synthesis. Has a role in fine tuning the metabolic fluctuations of cytosolic UDP-GlcNAc and their effects on hyaluronan synthesis that occur during tissue remodeling. The protein is Glucosamine-6-phosphate deaminase 2 of Bos taurus (Bovine).